The following is a 135-amino-acid chain: Small ribosomal subunit protein uS11 (135 aa).

Belongs to the universal ribosomal protein uS11 family. In terms of assembly, part of the 30S ribosomal subunit. Interacts with proteins S7 and S18. Binds to IF-3.

Functionally, located on the platform of the 30S subunit, it bridges several disparate RNA helices of the 16S rRNA. Forms part of the Shine-Dalgarno cleft in the 70S ribosome. The polypeptide is Small ribosomal subunit protein uS11 (Polynucleobacter necessarius subsp. necessarius (strain STIR1)).